We begin with the raw amino-acid sequence, 139 residues long: Classical arabinogalactan protein 3 (139 aa).

An N-terminal signal peptide occupies residues 1–21 (MALKTLQALIFLGLFAASCLA). Pyrrolidone carboxylic acid is present on Gln22. The interval 30–115 (TFLPPVESPS…PAPRADGPVA (86 aa)) is disordered. 2 stretches are compositionally biased toward pro residues: residues 46 to 77 (AEPP…PPTT) and 97 to 107 (PSGPTPAPAPA). The GPI-anchor amidated aspartate moiety is linked to residue Asp116. The propeptide at 117 to 139 (SALTNKAFLVSTVIAGALYAVLA) is removed in mature form.

It belongs to the classical AGP family. In terms of processing, O-glycosylated on the hydroxyproline residues. In terms of tissue distribution, expressed at a low level in roots.

The protein localises to the cell membrane. In terms of biological role, proteoglycan that seems to be implicated in diverse developmental roles such as differentiation, cell-cell recognition, embryogenesis and programmed cell death. This Arabidopsis thaliana (Mouse-ear cress) protein is Classical arabinogalactan protein 3 (AGP3).